The sequence spans 224 residues: Germin-like protein 1-2 (224 aa).

An N-terminal signal peptide occupies residues 1 to 29 (MASSRSVVLRVLVAVAVVAAAGAPRLAVA). Cys-38 and Cys-53 form a disulfide bridge. The Cupin type-1 domain maps to 67–215 (DAIVQAPSTS…TFLMGEDEVG (149 aa)). Asn-82 carries an N-linked (GlcNAc...) asparagine glycan. Positions 115, 117, 122, and 161 each coordinate Mn(2+). N-linked (GlcNAc...) asparagine glycosylation is present at Asn-170.

This sequence belongs to the germin family. Oligomer (believed to be a pentamer but probably hexamer).

The protein resides in the secreted. Its subcellular location is the extracellular space. It is found in the apoplast. Functionally, may play a role in plant defense. Probably has no oxalate oxidase activity even if the active site is conserved. This is Germin-like protein 1-2 from Oryza sativa subsp. japonica (Rice).